The following is an 86-amino-acid chain: Small ribosomal subunit protein bS16 (86 aa).

This sequence belongs to the bacterial ribosomal protein bS16 family.

This is Small ribosomal subunit protein bS16 from Xylella fastidiosa (strain 9a5c).